The following is a 217-amino-acid chain: GTP cyclohydrolase 1 (217 aa).

Residues Cys-109, His-112, and Cys-180 each coordinate Zn(2+).

Belongs to the GTP cyclohydrolase I family. In terms of assembly, toroid-shaped homodecamer, composed of two pentamers of five dimers.

It carries out the reaction GTP + H2O = 7,8-dihydroneopterin 3'-triphosphate + formate + H(+). The protein operates within cofactor biosynthesis; 7,8-dihydroneopterin triphosphate biosynthesis; 7,8-dihydroneopterin triphosphate from GTP: step 1/1. In Vibrio cholerae serotype O1 (strain ATCC 39315 / El Tor Inaba N16961), this protein is GTP cyclohydrolase 1.